The following is a 163-amino-acid chain: Lysosomal enzyme trafficking factor (163 aa).

A run of 2 helical transmembrane segments spans residues 40–60 (MGWI…YYVF) and 98–118 (LPFW…FLFL).

This sequence belongs to the LYSET family. In terms of assembly, interacts with GNPTAB; this interaction is important for proper localization of GNPTAB in Golgi stacks. Interacts with MBTPS1.

The protein resides in the golgi apparatus membrane. Its function is as follows. Required for mannose-6-phosphate-dependent trafficking of lysosomal enzymes. LYSET bridges GlcNAc-1-phosphate transferase (GNPTAB), to the membrane-bound transcription factor site-1 protease (MBTPS1), thus allowing proteolytic activation of the GNPTAB. GNPTAB is involved in the regulation of M6P-dependent Golgi-to-lysosome trafficking of lysosomal enzymes. LYSET is thus an essential factor for maturation and delivery of lysosomal hydrolases. Plays an essential function for cells that depend on lysosomal catabolism to generate nutrients. The polypeptide is Lysosomal enzyme trafficking factor (Lyset) (Mus musculus (Mouse)).